A 152-amino-acid chain; its full sequence is Superoxide dismutase [Cu-Zn] (152 aa).

The Cu cation site is built by H45, H47, and H62. C56 and C145 are disulfide-bonded. H62, H70, H79, and D82 together coordinate Zn(2+). Residue H119 participates in Cu cation binding.

This sequence belongs to the Cu-Zn superoxide dismutase family. Homodimer. Requires Cu cation as cofactor. The cofactor is Zn(2+).

The protein localises to the cytoplasm. It catalyses the reaction 2 superoxide + 2 H(+) = H2O2 + O2. Its function is as follows. Destroys radicals which are normally produced within the cells and which are toxic to biological systems. This Pisum sativum (Garden pea) protein is Superoxide dismutase [Cu-Zn] (SODCC).